Consider the following 204-residue polypeptide: MIGKLKGTIDEIGEDYVLVDVHGVCYVAHCSARTLSKLGSADEACVLFIETYVREDQLKLFGFMTALEREWFNLLQSVQGVGAKVALAVLSTLTPGELANAIALQDRAAVSRAPGVGPKVAMRLVTELKNRAPAFAGEAINIALKQELGEGVAAAPVADAVSALTNLGYSRDQAANAVAAAMKTAGDDADSAKLIRLGLKELAR.

The segment at 1 to 64 (MIGKLKGTID…EDQLKLFGFM (64 aa)) is domain I. The domain II stretch occupies residues 65 to 143 (TALEREWFNL…AFAGEAINIA (79 aa)). Residues 144–151 (LKQELGEG) form a flexible linker region. Residues 152-204 (VAAAPVADAVSALTNLGYSRDQAANAVAAAMKTAGDDADSAKLIRLGLKELAR) are domain III.

Belongs to the RuvA family. As to quaternary structure, homotetramer. Forms an RuvA(8)-RuvB(12)-Holliday junction (HJ) complex. HJ DNA is sandwiched between 2 RuvA tetramers; dsDNA enters through RuvA and exits via RuvB. An RuvB hexamer assembles on each DNA strand where it exits the tetramer. Each RuvB hexamer is contacted by two RuvA subunits (via domain III) on 2 adjacent RuvB subunits; this complex drives branch migration. In the full resolvosome a probable DNA-RuvA(4)-RuvB(12)-RuvC(2) complex forms which resolves the HJ.

It is found in the cytoplasm. Its function is as follows. The RuvA-RuvB-RuvC complex processes Holliday junction (HJ) DNA during genetic recombination and DNA repair, while the RuvA-RuvB complex plays an important role in the rescue of blocked DNA replication forks via replication fork reversal (RFR). RuvA specifically binds to HJ cruciform DNA, conferring on it an open structure. The RuvB hexamer acts as an ATP-dependent pump, pulling dsDNA into and through the RuvAB complex. HJ branch migration allows RuvC to scan DNA until it finds its consensus sequence, where it cleaves and resolves the cruciform DNA. The protein is Holliday junction branch migration complex subunit RuvA of Rhizobium leguminosarum bv. trifolii (strain WSM2304).